Here is a 1103-residue protein sequence, read N- to C-terminus: Ubiquitin carboxyl-terminal hydrolase 7 (1103 aa).

A compositionally biased stretch (low complexity) spans 1-11; it reads MNHQQQQQQQQ. Residues 1-40 form a disordered region; it reads MNHQQQQQQQQKAGEQQLSEPEDMEMEAGDTDDPPRITQN. Residues 1-209 form an interaction with TSPYL5 region; that stretch reads MNHQQQQQQQ…APHGVAWDSK (209 aa). S19 bears the Phosphoserine mark. Positions 20-32 are enriched in acidic residues; that stretch reads EPEDMEMEAGDTD. 2 positions are modified to phosphoserine: S50 and S54. The segment at 54-209 is interaction with p53/TP53 and MDM2; sequence SNAEEDMEDD…APHGVAWDSK (156 aa). An MATH domain is found at 69–196; the sequence is EATFQFTVER…DDKVTFEVFV (128 aa). Residues 71 to 206 are necessary for nuclear localization; the sequence is TFQFTVERFS…QADAPHGVAW (136 aa). The USP domain maps to 215–522; that stretch reads VGLKNQGATC…NAYMLVYIRE (308 aa). Catalysis depends on C224, which acts as the Nucleophile. H465 acts as the Proton acceptor in catalysis. K870 bears the N6-acetyllysine; alternate mark. A Glycyl lysine isopeptide (Lys-Gly) (interchain with G-Cter in SUMO2); alternate cross-link involves residue K870. K870 participates in a covalent cross-link: Glycyl lysine isopeptide (Lys-Gly) (interchain with G-Cter in ubiquitin); alternate. A Glycyl lysine isopeptide (Lys-Gly) (interchain with G-Cter in SUMO2) cross-link involves residue K883. Position 964 is a phosphoserine (S964). Residues K1085 and K1097 each carry the N6-acetyllysine modification.

Belongs to the peptidase C19 family. Monomer. Homodimer. Part of a complex with DAXX, MDM2, RASSF1 and USP7. Part of a complex with DAXX, MDM2 and USP7. Interacts with MDM2; the interaction is independent of p53/TP53. Interacts with DAXX; the interaction is direct and independent of MDM2 and p53/TP53. Component of a complex composed of KMT2E, OGT and USP7; the complex stabilizes KMT2E, preventing KMT2E ubiquitination and proteasomal-mediated degradation. Interacts (via MATH domain) with KMT2E. Interacts with OGT. Interacts with FOXO4; the interaction is enhanced in presence of hydrogen peroxide and occurs independently of p53/TP53. Interacts with p53/TP53; the interaction is enhanced in response to DNA damage; the interaction is impaired by TSPYL5. Interacts with PTEN; the interaction is direct. Interacts with ATXN1 and the strength of interaction is influenced by the length of the poly-Gln region in ATXN1. A weaker interaction seen with mutants having longer poly-Gln regions. Interacts with KIAA1530/UVSSA. Interacts with MEX3C and antagonizes its ability to degrade mRNA. Interacts with DNMT1 and UHRF1. Interacts with FOXP3. Interacts (via MATH domain) with RNF220. Associated component of the Polycomb group (PcG) multiprotein PRC1-like complex. Interacts with EPOP. Interacts with OTUD4 and USP9X; the interaction is direct. Interacts with CRY2. Interacts with REST. Interacts with ERCC6. Part of a complex consisting of USP7, MAGEL2 and TRIM27; directly interacts with MAGEL2; directly interacts with TRIM27. In terms of processing, polyneddylated. Not sumoylated. Post-translationally, ubiquitinated at Lys-870. Polyubiquitinated. As to expression, strongly expressed in the testis, spleen and brain. Weakly expressed in the stomach, small intestine, skeletal muscle and uterus.

The protein resides in the nucleus. Its subcellular location is the cytoplasm. The protein localises to the PML body. It localises to the chromosome. It carries out the reaction Thiol-dependent hydrolysis of ester, thioester, amide, peptide and isopeptide bonds formed by the C-terminal Gly of ubiquitin (a 76-residue protein attached to proteins as an intracellular targeting signal).. Functionally, hydrolase that deubiquitinates target proteins such as ARMC5, FOXO4, DEPTOR, KAT5, p53/TP53, MDM2, ERCC6, DNMT1, UHRF1, PTEN, KMT2E/MLL5 and DAXX. Together with DAXX, prevents MDM2 self-ubiquitination and enhances the E3 ligase activity of MDM2 towards p53/TP53, thereby promoting p53/TP53 ubiquitination and proteasomal degradation. Deubiquitinates p53/TP53, preventing degradation of p53/TP53, and enhances p53/TP53-dependent transcription regulation, cell growth repression and apoptosis. Deubiquitinates p53/TP53 and MDM2 and strongly stabilizes p53/TP53 even in the presence of excess MDM2, and also induces p53/TP53-dependent cell growth repression and apoptosis. Deubiquitination of FOXO4 in presence of hydrogen peroxide is not dependent on p53/TP53 and inhibits FOXO4-induced transcriptional activity. In association with DAXX, is involved in the deubiquitination and translocation of PTEN from the nucleus to the cytoplasm, both processes that are counteracted by PML. Deubiquitinates KMT2E preventing KMT2E proteasomal-mediated degradation. Involved in cell proliferation during early embryonic development. Involved in transcription-coupled nucleotide excision repair (TC-NER) in response to UV damage: recruited to DNA damage sites following interaction with KIAA1530/UVSSA and promotes deubiquitination of ERCC6, preventing UV-induced degradation of ERCC6. Involved in maintenance of DNA methylation via its interaction with UHRF1 and DNMT1: acts by mediating deubiquitination of UHRF1 and DNMT1, preventing their degradation and promoting DNA methylation by DNMT1. Deubiquitinates alkylation repair enzyme ALKBH3. OTUD4 recruits USP7 and USP9X to stabilize ALKBH3, thereby promoting the repair of alkylated DNA lesions. Acts as a chromatin regulator via its association with the Polycomb group (PcG) multiprotein PRC1-like complex; may act by deubiquitinating components of the PRC1-like complex. Able to mediate deubiquitination of histone H2B; it is however unsure whether this activity takes place in vivo. Exhibits a preference towards 'Lys-48'-linked ubiquitin chains. Increases regulatory T-cells (Treg) suppressive capacity by deubiquitinating and stabilizing transcription factor FOXP3 which is crucial for Treg cell function. Plays a role in the maintenance of the circadian clock periodicity via deubiquitination and stabilization of the CRY1 and CRY2 proteins. Deubiquitinates REST, thereby stabilizing REST and promoting the maintenance of neural progenitor cells. Deubiquitinates SIRT7, inhibiting SIRT7 histone deacetylase activity and regulating gluconeogenesis. Involved in the regulation of WASH-dependent actin polymerization at the surface of endosomes and the regulation of endosomal protein recycling. It maintains optimal WASH complex activity and precise F-actin levels via deubiquitination of TRIM27 and WASHC1. Mediates the deubiquitination of phosphorylated DEPTOR, promoting its stability and leading to decreased mTORC1 signaling. This chain is Ubiquitin carboxyl-terminal hydrolase 7 (Usp7), found in Rattus norvegicus (Rat).